The primary structure comprises 162 residues: Probable chemoreceptor glutamine deamidase CheD (162 aa).

It belongs to the CheD family.

It catalyses the reaction L-glutaminyl-[protein] + H2O = L-glutamyl-[protein] + NH4(+). Functionally, probably deamidates glutamine residues to glutamate on methyl-accepting chemotaxis receptors (MCPs), playing an important role in chemotaxis. The protein is Probable chemoreceptor glutamine deamidase CheD of Clostridium botulinum (strain Alaska E43 / Type E3).